The chain runs to 1765 residues: RANBP2-like and GRIP domain-containing protein 5/6 (1765 aa).

Thr-19 carries the post-translational modification Phosphothreonine. Ser-21 is subject to Phosphoserine. 3 TPR repeats span residues 26–59, 60–93, and 648–681; these read SMKGFYFAKLYYEAKEYDLAKKYICTYINVQERD, PKAHRFLGLLYELEENTEKAVECYRRSVELNPTQ, and EDAHITFAMLDAVNGNIEDAVTAFESIKSVVSYW. Disordered regions lie at residues 760–804 and 924–945; these read GPLY…PRWT and FGISEPGNQEKKREKPLENDTG. The span at 778-797 shows a compositional bias: low complexity; sequence STPSPTKYSLSPSKSYKYSP. Positions 931–941 are enriched in basic and acidic residues; it reads NQEKKREKPLE. In terms of domain architecture, RanBD1 1 spans 1036 to 1172; the sequence is HFEPVVQMPE…FEECQRLLLD (137 aa). Disordered regions lie at residues 1214–1247 and 1306–1330; these read KVTEEENKGSGTGAAGASDTTIKPNAENTGPTLE and AKLNQSGTSVGTDEESVVTQEEERD. A compositionally biased stretch (polar residues) spans 1235 to 1244; that stretch reads IKPNAENTGP. The span at 1317-1329 shows a compositional bias: acidic residues; that stretch reads TDEESVVTQEEER. Residues 1333 to 1469 form the RanBD1 2 domain; sequence YFEPVVPLPD…FDEAKTAQEK (137 aa). Residues 1580-1593 are compositionally biased toward polar residues; that stretch reads NNSETSSVAQSGSE. Residues 1580–1621 form a disordered region; it reads NNSETSSVAQSGSESKVEPKKCELSKNSDIEQSSDSKVKNLS. A compositionally biased stretch (basic and acidic residues) spans 1594-1617; the sequence is SKVEPKKCELSKNSDIEQSSDSKV. Positions 1702-1752 constitute a GRIP domain; that stretch reads REKSAANLEYLKNVLLQFIFLKPGSERERLLPVINTMLQLSPEEKGKLAAV.

Expressed in testis.

The protein localises to the cytoplasm. This is RANBP2-like and GRIP domain-containing protein 5/6 (RGPD5) from Homo sapiens (Human).